A 513-amino-acid polypeptide reads, in one-letter code: Histidine ammonia-lyase (513 aa).

A cross-link (5-imidazolinone (Ala-Gly)) is located at residues 146 to 148 (ASG). Ser147 carries the 2,3-didehydroalanine (Ser) modification.

The protein belongs to the PAL/histidase family. Post-translationally, contains an active site 4-methylidene-imidazol-5-one (MIO), which is formed autocatalytically by cyclization and dehydration of residues Ala-Ser-Gly.

It localises to the cytoplasm. It carries out the reaction L-histidine = trans-urocanate + NH4(+). It functions in the pathway amino-acid degradation; L-histidine degradation into L-glutamate; N-formimidoyl-L-glutamate from L-histidine: step 1/3. The chain is Histidine ammonia-lyase from Shewanella oneidensis (strain ATCC 700550 / JCM 31522 / CIP 106686 / LMG 19005 / NCIMB 14063 / MR-1).